A 158-amino-acid polypeptide reads, in one-letter code: Histone H3-like centromeric protein CSE4 (158 aa).

Residues Met1 to Leu18 show a composition bias toward polar residues. Residues Met1–Lys59 form a disordered region. The segment covering Arg20–Arg29 has biased composition (basic and acidic residues). Residues Thr54–Asn157 are H3-like.

The protein belongs to the histone H3 family. As to quaternary structure, component of centromeric nucleosomes, where DNA is wrapped around a histone octamer core. The octamer contains two molecules each of H2A, H2B, CSE4/CENPA and H4 assembled in one CSE4-H4 heterotetramer and two H2A-H2B heterodimers. Interacts with the inner kinetochore. In terms of processing, ubiquitinated. Is degraded through ubiquitin-mediated proteolysis when not protected by its association to the kinetochore.

It is found in the nucleus. It localises to the chromosome. The protein localises to the centromere. Histone H3-like nucleosomal protein that is specifically found in centromeric nucleosomes. Replaces conventional H3 in the nucleosome core of centromeric chromatin that serves as an assembly site for the inner kinetochore. Required for recruitment and assembly of kinetochore proteins, mitotic progression and chromosome segregation. May serve as an epigenetic mark that propagates centromere identity through replication and cell division. The chain is Histone H3-like centromeric protein CSE4 (CSE4) from Millerozyma farinosa (Yeast).